A 318-amino-acid chain; its full sequence is Thymidylate synthase (318 aa).

Residues Arg25 and 180 to 181 each bind dUMP; that span reads RR. Cys200 functions as the Nucleophile in the catalytic mechanism. Residues 220-223, Asn231, and 261-263 contribute to the dUMP site; these read RSGD and HIY. Asp223 is a (6R)-5,10-methylene-5,6,7,8-tetrahydrofolate binding site. Ala317 contacts (6R)-5,10-methylene-5,6,7,8-tetrahydrofolate.

It belongs to the thymidylate synthase family. Bacterial-type ThyA subfamily. Homodimer.

It is found in the cytoplasm. It catalyses the reaction dUMP + (6R)-5,10-methylene-5,6,7,8-tetrahydrofolate = 7,8-dihydrofolate + dTMP. The protein operates within pyrimidine metabolism; dTTP biosynthesis. In terms of biological role, catalyzes the reductive methylation of 2'-deoxyuridine-5'-monophosphate (dUMP) to 2'-deoxythymidine-5'-monophosphate (dTMP) while utilizing 5,10-methylenetetrahydrofolate (mTHF) as the methyl donor and reductant in the reaction, yielding dihydrofolate (DHF) as a by-product. This enzymatic reaction provides an intracellular de novo source of dTMP, an essential precursor for DNA biosynthesis. This is Thymidylate synthase from Bacillus cereus (strain ATCC 14579 / DSM 31 / CCUG 7414 / JCM 2152 / NBRC 15305 / NCIMB 9373 / NCTC 2599 / NRRL B-3711).